A 75-amino-acid polypeptide reads, in one-letter code: Meucin-49 (75 aa).

Positions 1-22 (MNKKILLVIFIVTMLIVDEVNS) are cleaved as a signal peptide.

This sequence belongs to the non-disulfide-bridged peptide (NDBP) superfamily. Long chain multifunctional peptide (group 2) family. As to expression, expressed by the venom gland.

The protein resides in the secreted. In terms of biological role, insecticidal toxin and antimicrobial peptide with potent activity against both Gram-negative and -positive bacteria, as well as against fungi. Acts by disrupting bacterial membrane integrity. Shows broad-spectrum and highly potent bactericidal activities against the Gram-positive bacteria B.cereus, B.megaterium, B.subtilis, M.luteus, S.aureus, S.epidermidis, S.warneri, S.griseus, S.scabiei, S.mutans, S.salivarius, and S.sanguinis. Also exhibits a wide spectrum of activity against the Gram-negative bacteria A.faecalis, E.coli, P.aeruginosa, P.solanacearum, S.enterica, S.marcescens, and S.maltophilia. Also shows antimicrobial activities against the fungal strains Aspergillus flavus, A.fumigatus, A.nidulans, A.niger, Beauveria bassiana, and Saccharomyces cerevisiae. Its antibiotic activity is potentiated by other antibacterial peptides such as MeuNaTxbeta-4. Also induces cytolysis on mice, lizards and birds erythrocytes. In Mesobuthus eupeus (Lesser Asian scorpion), this protein is Meucin-49.